The primary structure comprises 93 residues: uncharacterized protein (93 aa).

Residues 25–68 (DIKKLSQVKSELEQGKALLEEEKKELIEKNSNLNLQISNMNHLK) are a coiled coil.

This is an uncharacterized protein from Dictyostelium discoideum (Social amoeba).